A 1354-amino-acid polypeptide reads, in one-letter code: Ubiquitin carboxyl-terminal hydrolase 47 (1354 aa).

The span at 114-133 (EQPQLASDESGTADSSGLDD) shows a compositional bias: polar residues. The disordered stretch occupies residues 114–139 (EQPQLASDESGTADSSGLDDSTQEKF). Residues 174-549 (VGLVNQAMTC…NAYMLMYRLK (376 aa)) form the USP domain. Residue Cys183 is the Nucleophile of the active site. The tract at residues 408–438 (DVEDEKSPQTDSCTDSGAENEGSCHSDQMSN) is disordered. Polar residues predominate over residues 416–438 (QTDSCTDSGAENEGSCHSDQMSN). Residue His488 is the Proton acceptor of the active site. The span at 863–882 (LSLQQHQDGGNGDSSKSTEG) shows a compositional bias: polar residues. Disordered stretches follow at residues 863 to 1004 (LSLQ…ESGK) and 1314 to 1335 (LAKK…SPRK). The span at 920–930 (PEERSDSDVNN) shows a compositional bias: basic and acidic residues. Residues 933–949 (STSSVDSDILSSSHSSD) show a composition bias toward low complexity. A compositionally biased stretch (basic and acidic residues) spans 977–986 (KANDGKKETW). Residues 987–1000 (DTAEEDSGTDSEYD) are compositionally biased toward acidic residues.

It belongs to the peptidase C19 family. USP47 subfamily.

The protein localises to the cytoplasm. The enzyme catalyses Thiol-dependent hydrolysis of ester, thioester, amide, peptide and isopeptide bonds formed by the C-terminal Gly of ubiquitin (a 76-residue protein attached to proteins as an intracellular targeting signal).. In terms of biological role, ubiquitin-specific protease that specifically deubiquitinates monoubiquitinated DNA polymerase beta (polb), stabilizing polb thereby playing a role in base-excision repair (BER). The protein is Ubiquitin carboxyl-terminal hydrolase 47 (usp47) of Xenopus tropicalis (Western clawed frog).